A 310-amino-acid chain; its full sequence is Putative carboxypeptidase SCO6489 (310 aa).

Serine 116 serves as the catalytic Nucleophile. Active-site charge relay system residues include glutamate 212 and histidine 277.

This sequence belongs to the peptidase S66 family.

The sequence is that of Putative carboxypeptidase SCO6489 from Streptomyces coelicolor (strain ATCC BAA-471 / A3(2) / M145).